Consider the following 287-residue polypeptide: Membrane protein insertase YidC 2 (287 aa).

Residues 1–26 (MKKKKRFKQKLLIASLVIGLVAVLSG) form the signal peptide. C27 is lipidated: N-palmitoyl cysteine. C27 carries S-diacylglycerol cysteine lipidation. 5 helical membrane-spanning segments follow: residues 65–85 (YAVG…PLMI), 135–155 (MMGC…YQAI), 178–198 (YILP…SMMG), 207–224 (AMIV…GITL), and 228–250 (LALY…NNPF).

This sequence belongs to the OXA1/ALB3/YidC family. Type 2 subfamily.

It localises to the cell membrane. In terms of biological role, required for the insertion and/or proper folding and/or complex formation of integral membrane proteins into the membrane. Involved in integration of membrane proteins that insert both dependently and independently of the Sec translocase complex, as well as at least some lipoproteins. The chain is Membrane protein insertase YidC 2 from Listeria innocua serovar 6a (strain ATCC BAA-680 / CLIP 11262).